Reading from the N-terminus, the 660-residue chain is Neurexin-2-beta (660 aa).

A compositionally biased stretch (gly residues) spans Met1–Gly10. The segment at Met1–Pro27 is disordered. The signal sequence occupies residues Met1 to Gly46. The Extracellular segment spans residues Ala47–Thr584. Residues Thr87–Ser295 form the Laminin G-like domain. Residues Asp139 and Val156 each contribute to the Ca(2+) site. An N-linked (GlcNAc...) asparagine glycan is attached at Asn186. Ca(2+)-binding residues include Ile238 and Asn240. Ser350 is a glycosylation site (O-linked (Xyl...) (heparan sulfate) serine). 2 disordered regions span residues Ala408–Thr458 and Glu537–Pro571. N-linked (GlcNAc...) asparagine glycosylation occurs at Asn561. Residues Gly585–Met605 form a helical membrane-spanning segment. Residues Tyr606 to Val660 lie on the Cytoplasmic side of the membrane. The segment at Asn627–Val660 is disordered.

This sequence belongs to the neurexin family. In terms of assembly, interacts (via cytoplasmic C-terminal region) with CASK. Specific isoforms bind alpha-dystroglycan and neuroligins NLGN1, NLGN2 and NLGN3. Interacts with CBLN1, CBLN2 and, less avidly, with CBLN4. Interacts with CLSTN3. O-glycosylated; contains heparan sulfate. Heparan sulfate attachment is required for synapse development by mediating interactions with neuroligins.

It localises to the presynaptic cell membrane. In terms of biological role, neuronal cell surface protein that may be involved in cell recognition and cell adhesion. The polypeptide is Neurexin-2-beta (Mus musculus (Mouse)).